The primary structure comprises 111 residues: MKAHKETSAGVVMSSPMATPELDEAIEVDVATSENLPWMCIVWDDPVNLMSYVSYVFQTVLGYDKKRANELMMQVHTEGKAAVSSGERDKVEADVKKLQVAGLWATMQQAG.

It belongs to the ClpS family. In terms of assembly, binds to the N-terminal domain of the chaperone ClpA.

Functionally, involved in the modulation of the specificity of the ClpAP-mediated ATP-dependent protein degradation. The chain is ATP-dependent Clp protease adapter protein ClpS from Corynebacterium aurimucosum (strain ATCC 700975 / DSM 44827 / CIP 107346 / CN-1) (Corynebacterium nigricans).